The following is a 258-amino-acid chain: Aspartate/glutamate leucyltransferase (258 aa).

This sequence belongs to the R-transferase family. Bpt subfamily.

It localises to the cytoplasm. It catalyses the reaction N-terminal L-glutamyl-[protein] + L-leucyl-tRNA(Leu) = N-terminal L-leucyl-L-glutamyl-[protein] + tRNA(Leu) + H(+). The enzyme catalyses N-terminal L-aspartyl-[protein] + L-leucyl-tRNA(Leu) = N-terminal L-leucyl-L-aspartyl-[protein] + tRNA(Leu) + H(+). Its function is as follows. Functions in the N-end rule pathway of protein degradation where it conjugates Leu from its aminoacyl-tRNA to the N-termini of proteins containing an N-terminal aspartate or glutamate. The protein is Aspartate/glutamate leucyltransferase of Bradyrhizobium sp. (strain ORS 278).